Here is a 29-residue protein sequence, read N- to C-terminus: Vodo peptide N (29 aa).

The segment at residues 1–29 is a cross-link (cyclopeptide (Gly-Asn)); the sequence is GLPVCGETCTLGKCYTAGCSCSWPVCYRN. Intrachain disulfides connect Cys5–Cys19, Cys9–Cys21, and Cys14–Cys26.

In terms of processing, this is a cyclic peptide.

In terms of biological role, probably participates in a plant defense mechanism. The chain is Vodo peptide N from Viola odorata (Sweet violet).